The sequence spans 403 residues: ATP phosphoribosyltransferase regulatory subunit (403 aa).

This sequence belongs to the class-II aminoacyl-tRNA synthetase family. HisZ subfamily. As to quaternary structure, heteromultimer composed of HisG and HisZ subunits.

The protein resides in the cytoplasm. The protein operates within amino-acid biosynthesis; L-histidine biosynthesis; L-histidine from 5-phospho-alpha-D-ribose 1-diphosphate: step 1/9. In terms of biological role, required for the first step of histidine biosynthesis. May allow the feedback regulation of ATP phosphoribosyltransferase activity by histidine. The polypeptide is ATP phosphoribosyltransferase regulatory subunit (Nostoc punctiforme (strain ATCC 29133 / PCC 73102)).